The chain runs to 207 residues: MYKNYNDVTESPRNALIPMVVEQTAKGERSYDIYSRLLKERVIFLTGQVEDHMANLVVAQLLFLESENPDQDISIYINSPGGAVTAGMSIYDTMQFIKPDVSTVCMGQACSMGAFLLAGGAKGKRFCLPSARVMIHQPLGGFQGQASDIQIHAQEILKIKNTLNERLAFHTGQEMATIERDTDRDNFMSADQAVAYGLVDGILSQRG.

Ser-111 functions as the Nucleophile in the catalytic mechanism. His-136 is an active-site residue.

It belongs to the peptidase S14 family. Fourteen ClpP subunits assemble into 2 heptameric rings which stack back to back to give a disk-like structure with a central cavity, resembling the structure of eukaryotic proteasomes.

The protein localises to the cytoplasm. It carries out the reaction Hydrolysis of proteins to small peptides in the presence of ATP and magnesium. alpha-casein is the usual test substrate. In the absence of ATP, only oligopeptides shorter than five residues are hydrolyzed (such as succinyl-Leu-Tyr-|-NHMec, and Leu-Tyr-Leu-|-Tyr-Trp, in which cleavage of the -Tyr-|-Leu- and -Tyr-|-Trp bonds also occurs).. Cleaves peptides in various proteins in a process that requires ATP hydrolysis. Has a chymotrypsin-like activity. Plays a major role in the degradation of misfolded proteins. In Aeromonas salmonicida (strain A449), this protein is ATP-dependent Clp protease proteolytic subunit.